Reading from the N-terminus, the 185-residue chain is MKFTIVFAGLLGVFLAPALANYNINVNDDNNNAGSGQQSVSVNNEHNVANVDNNNGWDSWNSIWDYGNGFAATRLFQKKTCIVHKMNKEVMPSIQSLDALVKEKKLQGKGPGGPPPKGLMYSVNPNKVDDLSKFGKNIANMCRGIPTYMAEEMQEASLFFYSGTCYTTSVLWIVDISFCGDTVEN.

A signal peptide spans methionine 1–alanine 20. The BRICHOS domain occupies asparagine 54–alanine 150. A disulfide bond links cysteine 81 and cysteine 142.

Belongs to the gastrokine family. In terms of tissue distribution, expressed in stomach (at protein level). No expression is detected in cancer tissue or gastric cancer cell lines.

It is found in the secreted. The protein resides in the cytoplasmic granule. Its subcellular location is the golgi apparatus. Functionally, has mitogenic activity and may be involved in maintaining the integrity of the gastric mucosal epithelium. The polypeptide is Gastrokine-1 (GKN1) (Homo sapiens (Human)).